A 40-amino-acid polypeptide reads, in one-letter code: MTDTTGRIPLWIIGTVTGILVIGLIGIFFFGSYSGLGSSL.

Residues 10–30 (LWIIGTVTGILVIGLIGIFFF) form a helical membrane-spanning segment.

This sequence belongs to the PsbJ family. PSII is composed of 1 copy each of membrane proteins PsbA, PsbB, PsbC, PsbD, PsbE, PsbF, PsbH, PsbI, PsbJ, PsbK, PsbL, PsbM, PsbT, PsbX, PsbY, PsbZ, Psb30/Ycf12, at least 3 peripheral proteins of the oxygen-evolving complex and a large number of cofactors. It forms dimeric complexes.

It is found in the plastid membrane. Its function is as follows. One of the components of the core complex of photosystem II (PSII). PSII is a light-driven water:plastoquinone oxidoreductase that uses light energy to abstract electrons from H(2)O, generating O(2) and a proton gradient subsequently used for ATP formation. It consists of a core antenna complex that captures photons, and an electron transfer chain that converts photonic excitation into a charge separation. This chain is Photosystem II reaction center protein J, found in Cuscuta exaltata (Tall dodder).